The sequence spans 2098 residues: 1-phosphatidylinositol 3-phosphate 5-kinase (2098 aa).

The disordered stretch occupies residues 1-45; sequence MATDDKTSPTLDSANDLPRSPTSPSHLTHFKPLTPDQDEPPFKSA. An N-acetylalanine modification is found at Ala2. Phosphoserine; by autocatalysis is present on residues Ser23 and Ser48. The interval 57-123 is disordered; sequence KERAEGGQGE…EPTFGGHDPR (67 aa). Residues 66–88 show a composition bias toward polar residues; that stretch reads EQQPLSGSWTSPQLPSRTQSVRS. At Ser88 the chain carries Phosphoserine. An FYVE-type zinc finger spans residues 158–218; sequence DSQCKECYDC…ACTYCRKIAL (61 aa). Residues Cys164, Cys167, Cys180, Cys183, Cys188, Cys191, Cys210, and Cys213 each coordinate Zn(2+). A disordered region spans residues 292–329; the sequence is VQEDAGKSPARNRSASITNLSLDRSGSPMVPSYETSVS. Ser299, Ser307, and Ser312 each carry phosphoserine. Positions 302 to 315 are enriched in polar residues; that stretch reads RNRSASITNLSLDR. Ser318 is subject to Phosphoserine; by PKB/AKT1 or PKB/AKT2. Ser329 is subject to Phosphoserine. The 76-residue stretch at 365–440 folds into the DEP domain; sequence HSSGMEFQDH…DEYALYRPLQ (76 aa). Residues 442–459 are compositionally biased toward polar residues; sequence TEFSETPSPDSDSVNSVE. The tract at residues 442 to 469 is disordered; that stretch reads TEFSETPSPDSDSVNSVEGHSEPSWFKD. Residues 460–469 show a composition bias toward basic and acidic residues; that stretch reads GHSEPSWFKD. Position 475 is a phosphoserine (Ser475). The interval 484-505 is disordered; sequence GDDNLANSASPSKRTSVSSFQS. Residues 488–505 show a composition bias toward polar residues; it reads LANSASPSKRTSVSSFQS. The segment at 616-868 is chaperonin-like domain; the sequence is MMALLQQLLH…MICVAYHSQL (253 aa). 2 disordered regions span residues 1161–1191 and 1512–1616; these read RIQP…NEGD and FQQE…STDS. Residues 1177–1186 show a composition bias toward low complexity; the sequence is SSTSSGQSGS. The residue at position 1522 (Ser1522) is a Phosphoserine; by autocatalysis. Phosphoserine occurs at positions 1544 and 1549. Positions 1562 to 1578 are enriched in low complexity; the sequence is LTTLSSQSSTSSTHLQL. Ser1669 is modified (phosphoserine; by autocatalysis). The disordered stretch occupies residues 1692 to 1799; that stretch reads QWNSAEEGLP…PQDEVDGGDT (108 aa). Low complexity predominate over residues 1704-1714; the sequence is STSDSRPKSSS. The segment covering 1723 to 1735 has biased composition (polar residues); that stretch reads GGQTNRTTETEPQ. Ser1754 is subject to Phosphoserine. Residues 1758–2084 enclose the PIPK domain; sequence SSQKRETLRG…RFCEAMDKYF (327 aa). The catalytic stretch occupies residues 1842 to 2098; it reads EEDFIRSLSH…DHWTGLGLNC (257 aa). 2 positions are modified to phosphoserine; by autocatalysis: Ser1969 and Ser2053.

As to quaternary structure, component of the PI(3,5)P2 regulatory complex/PAS complex, at least composed of PIKFYVE, FIG4 and VAC14. VAC14 nucleates the assembly of the complex and serves as a scaffold by pentamerizing into a star-shaped structure, which can bind a single copy each of PIKFYVE and FIG4 and coordinates their activities. Interacts (via chaperonin-like domain) with RABEPK; the interaction recruits RABEPK to the endosomal membrane. Interacts with SPAG9. Interacts with EGFR. Post-translationally, autophosphorylates which inhibits its own phosphatidylinositol 3-phosphate 5-kinase activity, stimulates FIG4 lipid phosphatase activity and down-regulates lipid product formation. Dephosphorylated by FIG4 in the PI(3,5)P2 regulatory complex, at Ser-48, Ser-1669 and Ser-2053. Phosphorylated in response to insulin at Ser-318 in a protein kinase B (PKB)-dependent manner.

The protein localises to the endosome membrane. It is found in the early endosome membrane. The protein resides in the cytoplasmic vesicle. It localises to the phagosome membrane. Its subcellular location is the late endosome membrane. It carries out the reaction a 1,2-diacyl-sn-glycero-3-phospho-(1D-myo-inositol-3-phosphate) + ATP = a 1,2-diacyl-sn-glycero-3-phospho-(1D-myo-inositol-3,5-bisphosphate) + ADP + H(+). The enzyme catalyses a 1,2-diacyl-sn-glycero-3-phospho-(1D-myo-inositol) + ATP = a 1,2-diacyl-sn-glycero-3-phospho-(1D-myo-inositol-5-phosphate) + ADP + H(+). It catalyses the reaction L-seryl-[protein] + ATP = O-phospho-L-seryl-[protein] + ADP + H(+). Inhibited by apilimod and YM201636. Functionally, dual specificity kinase implicated in myriad essential cellular processes such as maintenance of endomembrane homeostasis, and endocytic-vacuolar pathway, lysosomal trafficking, nuclear transport, stress- or hormone-induced signaling and cell cycle progression. The PI(3,5)P2 regulatory complex regulates both the synthesis and turnover of phosphatidylinositol 3,5-bisphosphate (PtdIns(3,5)P2). Sole enzyme to catalyze the phosphorylation of phosphatidylinositol 3-phosphate on the fifth hydroxyl of the myo-inositol ring, to form (PtdIns(3,5)P2). Also catalyzes the phosphorylation of phosphatidylinositol on the fifth hydroxyl of the myo-inositol ring, to form phosphatidylinositol 5-phosphate (PtdIns(5)P). Has serine-protein kinase activity and is able to autophosphorylate and transphosphorylate. Autophosphorylation inhibits its own phosphatidylinositol 3-phosphate 5-kinase activity, stimulates FIG4 lipid phosphatase activity and down-regulates lipid product formation. Involved in key endosome operations such as fission and fusion in the course of endosomal cargo transport. Required for the maturation of early into late endosomes, phagosomes and lysosomes. Regulates vacuole maturation and nutrient recovery following engulfment of macromolecules, initiates the redistribution of accumulated lysosomal contents back into the endosome network. Critical regulator of the morphology, degradative activity, and protein turnover of the endolysosomal system in macrophages and platelets. In neutrophils, critical to perform chemotaxis, generate ROS, and undertake phagosome fusion with lysosomes. Plays a key role in the processing and presentation of antigens by major histocompatibility complex class II (MHC class II) mediated by CTSS. Regulates melanosome biogenesis by controlling the delivery of proteins from the endosomal compartment to the melanosome. Essential for systemic glucose homeostasis, mediates insulin-induced signals for endosome/actin remodeling in the course of GLUT4 translocation/glucose uptake activation. Supports microtubule-based endosome-to-trans-Golgi network cargo transport, through association with SPAG9 and RABEPK. Mediates EGFR trafficking to the nucleus. Its function is as follows. (Microbial infection) Required for cell entry of coronaviruses SARS-CoV and SARS-CoV-2, as well as human coronavirus EMC (HCoV-EMC) by endocytosis. This is 1-phosphatidylinositol 3-phosphate 5-kinase from Homo sapiens (Human).